Reading from the N-terminus, the 78-residue chain is Serine rich endogenous peptide 19 (78 aa).

Residues 1 to 25 (MCNIVVFLLTLTLFLFSGLSNTAFA) form the signal peptide. The SCOOP motif motif lies at 50-64 (KIEVDGSCSRRAPGR). Positions 56-58 (SCS) match the SxS motif essential for MIK2 binding motif. Residues 57–78 (CSRRAPGRRRPPNRPPKPCTKP) form a disordered region. The span at 69–78 (NRPPKPCTKP) shows a compositional bias: pro residues.

It belongs to the serine rich endogenous peptide (SCOOP) phytocytokine family. In terms of assembly, interacts with MIK2 (via extracellular leucine-rich repeat domain); this interaction triggers the formation of complex between MIK2 and the BAK1/SERK3 and SERK4 coreceptors, and subsequent BAK1 activation by phosphorylation.

Its subcellular location is the cell membrane. The protein resides in the secreted. It is found in the extracellular space. It localises to the apoplast. Brassicaceae-specific phytocytokine (plant endogenous peptide released into the apoplast) perceived by MIK2 in a BAK1/SERK3 and SERK4 coreceptors-dependent manner, that modulates various physiological and antimicrobial processes including growth prevention and reactive oxygen species (ROS) response regulation. The sequence is that of Serine rich endogenous peptide 19 from Arabidopsis thaliana (Mouse-ear cress).